The chain runs to 272 residues: Phosphoribosylformylglycinamidine synthase subunit PurQ (272 aa).

A Glutamine amidotransferase type-1 domain is found at 8–243 (VLVMSGYGIN…SEPEYQLKKE (236 aa)). Cys98 acts as the Nucleophile in catalysis. Residues His225, Glu227, and Glu235 contribute to the active site.

As to quaternary structure, part of the FGAM synthase complex composed of 1 PurL, 1 PurQ and 2 PurS subunits.

It localises to the cytoplasm. It carries out the reaction N(2)-formyl-N(1)-(5-phospho-beta-D-ribosyl)glycinamide + L-glutamine + ATP + H2O = 2-formamido-N(1)-(5-O-phospho-beta-D-ribosyl)acetamidine + L-glutamate + ADP + phosphate + H(+). The enzyme catalyses L-glutamine + H2O = L-glutamate + NH4(+). The protein operates within purine metabolism; IMP biosynthesis via de novo pathway; 5-amino-1-(5-phospho-D-ribosyl)imidazole from N(2)-formyl-N(1)-(5-phospho-D-ribosyl)glycinamide: step 1/2. Functionally, part of the phosphoribosylformylglycinamidine synthase complex involved in the purines biosynthetic pathway. Catalyzes the ATP-dependent conversion of formylglycinamide ribonucleotide (FGAR) and glutamine to yield formylglycinamidine ribonucleotide (FGAM) and glutamate. The FGAM synthase complex is composed of three subunits. PurQ produces an ammonia molecule by converting glutamine to glutamate. PurL transfers the ammonia molecule to FGAR to form FGAM in an ATP-dependent manner. PurS interacts with PurQ and PurL and is thought to assist in the transfer of the ammonia molecule from PurQ to PurL. The sequence is that of Phosphoribosylformylglycinamidine synthase subunit PurQ from Methanococcus maripaludis (strain C7 / ATCC BAA-1331).